A 270-amino-acid chain; its full sequence is Aliphatic sulfonates import ATP-binding protein SsuB 3 (270 aa).

Residues 17–238 form the ABC transporter domain; the sequence is LAVQNLKKAF…ARGSHRLAAL (222 aa). 49–56 is an ATP binding site; it reads GRSGCGKS.

The protein belongs to the ABC transporter superfamily. Aliphatic sulfonates importer (TC 3.A.1.17.2) family. In terms of assembly, the complex is composed of two ATP-binding proteins (SsuB), two transmembrane proteins (SsuC) and a solute-binding protein (SsuA).

The protein localises to the cell inner membrane. The catalysed reaction is ATP + H2O + aliphatic sulfonate-[sulfonate-binding protein]Side 1 = ADP + phosphate + aliphatic sulfonateSide 2 + [sulfonate-binding protein]Side 1.. Functionally, part of the ABC transporter complex SsuABC involved in aliphatic sulfonates import. Responsible for energy coupling to the transport system. This chain is Aliphatic sulfonates import ATP-binding protein SsuB 3, found in Pseudomonas syringae pv. tomato (strain ATCC BAA-871 / DC3000).